The following is a 253-amino-acid chain: MPVLAGINSKVLKNGDSEPSPPPAGIYRIYNMRFCPWAQRALIYASVKNVPSEVINIHLKEKPDWYFSKHYKGQVPALELDEGKKHVIESAHIPEYLDDLFPESRILPSDPYEKVQQKLLLERLAAVAPAFYAAAQAANNPEGRDEKYAALVKAFEDAEKLLTGDFFSGKAKPGFADYLIFPNYQRVFWLSHILPNSPFSSESFPGPNFPKLAKWYRTLDSIPEVAAASQPTEMGVGFFNDYLKGTPNYDYGL.

The 81-residue stretch at 25–105 (GIYRIYNMRF…YLDDLFPESR (81 aa)) folds into the GST N-terminal domain. Cys35 acts as the Nucleophile in catalysis. Residues Lys62, Val75, and 89–90 (ES) each bind glutathione. In terms of domain architecture, GST C-terminal spans 110-238 (DPYEKVQQKL…SQPTEMGVGF (129 aa)).

It belongs to the GST superfamily. Omega family.

It carries out the reaction RX + glutathione = an S-substituted glutathione + a halide anion + H(+). The enzyme catalyses L-dehydroascorbate + 2 glutathione = glutathione disulfide + L-ascorbate. The catalysed reaction is methylarsonate + 2 glutathione + H(+) = methylarsonous acid + glutathione disulfide + H2O. In terms of biological role, exhibits glutathione-dependent thiol transferase activity. Has dehydroascorbate reductase activity and may contribute to the recycling of ascorbic acid. Participates in the biotransformation of inorganic arsenic and reduces monomethylarsonic acid (MMA). The polypeptide is Probable glutathione transferase omega-2 (Caenorhabditis briggsae).